We begin with the raw amino-acid sequence, 310 residues long: Homoserine kinase (310 aa).

ATP is bound at residue Pro91–Cys101.

This sequence belongs to the GHMP kinase family. Homoserine kinase subfamily.

It localises to the cytoplasm. It carries out the reaction L-homoserine + ATP = O-phospho-L-homoserine + ADP + H(+). Its pathway is amino-acid biosynthesis; L-threonine biosynthesis; L-threonine from L-aspartate: step 4/5. Catalyzes the ATP-dependent phosphorylation of L-homoserine to L-homoserine phosphate. The chain is Homoserine kinase from Sodalis glossinidius (strain morsitans).